Reading from the N-terminus, the 248-residue chain is 14-3-3 protein zeta (248 aa).

Belongs to the 14-3-3 family. Homodimer; homodimerization is not essential for modulating the activity of Slo. Interacts with phosphorylated Slob; the interaction with Slob mediates an indirect interaction with Slo. Interacts with phosphorylated yki. Interacts with hemo; this represses 14-3-3zeta activity which prevents the 14-3-3zeta-mediated activation of phosphoinositide 3-kinase Pi3K68D. This, in turn, inhibits the Pi3K68D-mediated conversion of phosphatidylinositol to phosphatidylinositol-3-phosphate and prevents progression of early endosomes through the maturation process which regulates subsequent steps of phagocytic processing. Interacts with REPTOR (when phosphorylated), this interaction may assist the cytoplasmic retention of REPTOR. Predominantly expressed in the ventral nerve cord of the embryo, and in the neural tissues of the head. Also found in the region posterior to the morphogenetic furrow of the eye imaginal disk where cells differentiate as photoreceptors.

The protein localises to the cytoplasm. It localises to the early endosome. Functionally, required in Raf-dependent cell proliferation and photoreceptor differentiation during eye development. Acts upstream of Raf and downstream of Ras, and is essential for viability. Acts as a negative regulator of the slo calcium channel via its interaction with slo-binding protein slob. Inhibits yki activity by restricting its nuclear localization. Binds to and promotes the activity of phosphoinositide 3-kinase Pi3K68D which converts phosphatidylinositol to phosphatidylinositol-3-phosphate and promotes maturation of early endosomes. This chain is 14-3-3 protein zeta (14-3-3zeta), found in Drosophila melanogaster (Fruit fly).